Reading from the N-terminus, the 203-residue chain is Urease accessory protein UreG (203 aa).

Residue 11–18 coordinates GTP; it reads GPVGSGKT.

The protein belongs to the SIMIBI class G3E GTPase family. UreG subfamily. Homodimer. UreD, UreF and UreG form a complex that acts as a GTP-hydrolysis-dependent molecular chaperone, activating the urease apoprotein by helping to assemble the nickel containing metallocenter of UreC. The UreE protein probably delivers the nickel.

The protein resides in the cytoplasm. In terms of biological role, facilitates the functional incorporation of the urease nickel metallocenter. This process requires GTP hydrolysis, probably effectuated by UreG. The polypeptide is Urease accessory protein UreG (Prochlorococcus marinus (strain MIT 9215)).